Consider the following 86-residue polypeptide: U-myrmeciitoxin(01)-Mg1a (86 aa).

The N-terminal stretch at Met-1–Ala-26 is a signal peptide. A propeptide spanning residues Lys-27–Gly-52 is cleaved from the precursor. Leu-85 is modified (leucine amide).

The protein belongs to the formicidae venom precursor-01 superfamily. Expressed by the venom gland. This toxin is detected along the entire venom gland, as well as in the venom reservoir, the venom duct and in the venom. No toxin are detected in the Dufour's gland.

The protein localises to the secreted. It is found in the target cell membrane. Its function is as follows. Toxin that may interact with target cell membranes, producing a concentration-dependent leak in ion conductance, possibly via multimeric pore formation. It produces an immediate sharp increase of calcium concentration in all DRG neurons. This influx in calcium stabilizes without resulting in any observable dye leakage, showing that the effect is not simply cytolytic. This toxin may be one of the major contributors to the pain associated with envenomation. The toxin also displays a weak cytotoxicity (on HEK cells) and some antimicrobial activity (MIC=2.5 uM on C.neoformans (var. grubii), MIC=10.2 uM on S.aureus), but is not hemolytic to human erythtrocytes. In vivo, intraplantar injection into mice causes spontaneous nocifensive behavior (licking, flinching, or shaking of the paw), which lasts 5-7 minutes (10 and 100 uM tested). Mechanical and heat hypoalgesia are observed at 20 and 25 minutes after injection (highest dose tested of 100 uM). In vivo, injection into crickets (A.domesticus) causes an immediate, dose-dependent, reversible and nonlethal incapacitation that lasts about 53 minutes at the highest dose tested (60 ug/g). The protein is U-myrmeciitoxin(01)-Mg1a of Myrmecia gulosa (Red bulldog ant).